We begin with the raw amino-acid sequence, 143 residues long: Ribulose bisphosphate carboxylase large chain (143 aa).

Positions 1-2 are excised as a propeptide; the sequence is MS. N-acetylproline is present on proline 3. Lysine 14 is modified (N6,N6,N6-trimethyllysine). Residue 123 is a binding site for substrate.

Belongs to the RuBisCO large chain family. Type I subfamily. As to quaternary structure, heterohexadecamer of 8 large chains and 8 small chains.

The protein resides in the plastid. It localises to the chloroplast. It catalyses the reaction 2 (2R)-3-phosphoglycerate + 2 H(+) = D-ribulose 1,5-bisphosphate + CO2 + H2O. The catalysed reaction is D-ribulose 1,5-bisphosphate + O2 = 2-phosphoglycolate + (2R)-3-phosphoglycerate + 2 H(+). In terms of biological role, ruBisCO catalyzes two reactions: the carboxylation of D-ribulose 1,5-bisphosphate, the primary event in carbon dioxide fixation, as well as the oxidative fragmentation of the pentose substrate in the photorespiration process. Both reactions occur simultaneously and in competition at the same active site. This Nemopanthus mucronatus (Catberry) protein is Ribulose bisphosphate carboxylase large chain (rbcL).